Reading from the N-terminus, the 131-residue chain is Probable ATP synthase subunit g 2, mitochondrial (131 aa).

This sequence belongs to the ATPase g subunit family. Subunit of the F-type ATPase which has 2 components, CF(1) - the catalytic core - and CF(0) - the membrane proton channel.

It is found in the mitochondrion membrane. In terms of biological role, mitochondrial membrane ATP synthase (F(1)F(0) ATP synthase or Complex V) produces ATP from ADP in the presence of a proton gradient across the membrane which is generated by electron transport complexes of the respiratory chain. F-type ATPases consist of two structural domains, F(1) - containing the extramembraneous catalytic core, and F(0) - containing the membrane proton channel, linked together by a central stalk and a peripheral stalk. During catalysis, ATP synthesis in the catalytic domain of F(1) is coupled via a rotary mechanism of the central stalk subunits to proton translocation. Part of the complex F(0) domain. Minor subunit located with subunit a in the membrane. This is Probable ATP synthase subunit g 2, mitochondrial from Caenorhabditis elegans.